The primary structure comprises 269 residues: Chymotrypsin-like elastase family member 2B (269 aa).

A signal peptide spans 1 to 16; that stretch reads MIRTLLLSTLVAGALS. A propeptide spans 17–28 (activation peptide); sequence CGVSTYAPDMSR. Residues 29–267 enclose the Peptidase S1 domain; the sequence is MLGGEEARPN…YNDWINSVIA (239 aa). Cys-58 and Cys-74 form a disulfide bridge. Catalysis depends on charge relay system residues His-73 and Asp-121. 3 disulfide bridges follow: Cys-155/Cys-222, Cys-186/Cys-202, and Cys-212/Cys-243. The active-site Charge relay system is the Ser-216.

It belongs to the peptidase S1 family. Elastase subfamily. Pancreas.

Its subcellular location is the secreted. It catalyses the reaction Preferential cleavage: Leu-|-Xaa, Met-|-Xaa and Phe-|-Xaa. Hydrolyzes elastin.. Its function is as follows. Acts upon elastin. This Homo sapiens (Human) protein is Chymotrypsin-like elastase family member 2B (CELA2B).